Consider the following 374-residue polypeptide: 4-hydroxy-3-methylbut-2-en-1-yl diphosphate synthase (flavodoxin) (374 aa).

Residues C272, C275, C307, and E314 each contribute to the [4Fe-4S] cluster site.

The protein belongs to the IspG family. Requires [4Fe-4S] cluster as cofactor.

The enzyme catalyses (2E)-4-hydroxy-3-methylbut-2-enyl diphosphate + oxidized [flavodoxin] + H2O + 2 H(+) = 2-C-methyl-D-erythritol 2,4-cyclic diphosphate + reduced [flavodoxin]. It participates in isoprenoid biosynthesis; isopentenyl diphosphate biosynthesis via DXP pathway; isopentenyl diphosphate from 1-deoxy-D-xylulose 5-phosphate: step 5/6. Converts 2C-methyl-D-erythritol 2,4-cyclodiphosphate (ME-2,4cPP) into 1-hydroxy-2-methyl-2-(E)-butenyl 4-diphosphate. This is 4-hydroxy-3-methylbut-2-en-1-yl diphosphate synthase (flavodoxin) from Acidiphilium cryptum (strain JF-5).